Consider the following 274-residue polypeptide: 2,3,4,5-tetrahydropyridine-2,6-dicarboxylate N-succinyltransferase (274 aa).

Belongs to the transferase hexapeptide repeat family.

It localises to the cytoplasm. It carries out the reaction (S)-2,3,4,5-tetrahydrodipicolinate + succinyl-CoA + H2O = (S)-2-succinylamino-6-oxoheptanedioate + CoA. It participates in amino-acid biosynthesis; L-lysine biosynthesis via DAP pathway; LL-2,6-diaminopimelate from (S)-tetrahydrodipicolinate (succinylase route): step 1/3. The protein is 2,3,4,5-tetrahydropyridine-2,6-dicarboxylate N-succinyltransferase of Delftia acidovorans (strain DSM 14801 / SPH-1).